Consider the following 176-residue polypeptide: Large ribosomal subunit protein uL10 (176 aa).

This sequence belongs to the universal ribosomal protein uL10 family. Part of the ribosomal stalk of the 50S ribosomal subunit. The N-terminus interacts with L11 and the large rRNA to form the base of the stalk. The C-terminus forms an elongated spine to which L12 dimers bind in a sequential fashion forming a multimeric L10(L12)X complex.

Its function is as follows. Forms part of the ribosomal stalk, playing a central role in the interaction of the ribosome with GTP-bound translation factors. This is Large ribosomal subunit protein uL10 from Saccharophagus degradans (strain 2-40 / ATCC 43961 / DSM 17024).